Reading from the N-terminus, the 152-residue chain is Transcription elongation factor Spt5 (152 aa).

Residues 94–124 (PGDLVEVIAGPFKGQKAKVVKIDESKDEVVV) form the KOW domain.

Belongs to the archaeal Spt5 family. In terms of assembly, heterodimer composed of Spt4 and Spt5. Interacts with RNA polymerase (RNAP) independently of nucleic acids. Forms a homodimer in solution.

Functionally, stimulates transcription elongation. This chain is Transcription elongation factor Spt5, found in Pyrococcus furiosus (strain ATCC 43587 / DSM 3638 / JCM 8422 / Vc1).